A 103-amino-acid chain; its full sequence is Signal recognition particle 19 kDa protein (103 aa).

It belongs to the SRP19 family. In terms of assembly, part of the signal recognition particle protein translocation system, which is composed of SRP and FtsY. Archaeal SRP consists of a 7S RNA molecule of 300 nucleotides and two protein subunits: SRP54 and SRP19.

The protein localises to the cytoplasm. Involved in targeting and insertion of nascent membrane proteins into the cytoplasmic membrane. Binds directly to 7S RNA and mediates binding of the 54 kDa subunit of the SRP. The protein is Signal recognition particle 19 kDa protein of Hyperthermus butylicus (strain DSM 5456 / JCM 9403 / PLM1-5).